The following is a 439-amino-acid chain: MHSWSAPRVPQFPSSIPAVADSPAAEVAALPELRLYDTADDRVKAVALPDDGAPVGIYVCGITPYDSTHLGHAATYNTFDLVNRYLRAAGHGVTYVQNVTDVDDPLFERADRDGVDWRELGKEQTDLFRSDMTQLRILPPEFFVGAMETIDEVVEMVSTLLDKGAAYVVDGEYPDIYADHTYTEQFGYESRYDEATMRELFAERGGDPEREGKRHPLDALLWRAHRTGEPEWDAPFGSGRPGWHVECAAIATNRLGEQFAIQGGGVDLRYPHHEYSAAHAEAACGNQRMAGHYVHTGMIGLEGTKMSKSLGNLEFVSALTAQGFDPAAIRVGLYAGHYREDRDWSAEVLNEAEDRLAKWRAAAAEENNPQRVAEVLATVTGHLANDLDTPSVLRTLDEWAAAVNESIGASGYQVTPAADRTAASQALTAGLDALLGVSV.

Residue Cys60 participates in Zn(2+) binding. Residues 60–63, Thr75, and 98–100 contribute to the L-cysteinyl-5'-AMP site; these read CGIT and NVT. Positions 62 to 72 match the 'HIGH' region motif; that stretch reads ITPYDSTHLGH. The 'ERGGDP' region motif lies at 203 to 208; that stretch reads ERGGDP. Residue Trp243 coordinates L-cysteinyl-5'-AMP. Cys247 is a Zn(2+) binding site. An L-cysteinyl-5'-AMP-binding site is contributed by 265–267; sequence GVD. His272 serves as a coordination point for Zn(2+). Residue Ile299 coordinates L-cysteinyl-5'-AMP. The 'KMSKS' region signature appears at 305 to 309; the sequence is KMSKS.

It belongs to the class-I aminoacyl-tRNA synthetase family. MshC subfamily. Monomer. Zn(2+) serves as cofactor.

It catalyses the reaction 1D-myo-inositol 2-amino-2-deoxy-alpha-D-glucopyranoside + L-cysteine + ATP = 1D-myo-inositol 2-(L-cysteinylamino)-2-deoxy-alpha-D-glucopyranoside + AMP + diphosphate + H(+). Functionally, catalyzes the ATP-dependent condensation of GlcN-Ins and L-cysteine to form L-Cys-GlcN-Ins. This is L-cysteine:1D-myo-inositol 2-amino-2-deoxy-alpha-D-glucopyranoside ligase 2 from Corynebacterium urealyticum (strain ATCC 43042 / DSM 7109).